Here is a 138-residue protein sequence, read N- to C-terminus: MLMPKRTKFRKQQKGQFAGLSKGATFVDFGEFGMQTLERGWVTSRQIEACRVAINRYLKRKGKVWIRVFPDKSVTKKPAETRMGKGKGAPDHWVAVVRPGRILFEVANVSREDAQDALRRAAAKLGIRTRFVKRVERV.

It belongs to the universal ribosomal protein uL16 family. Part of the 50S ribosomal subunit.

Its function is as follows. Binds 23S rRNA and is also seen to make contacts with the A and possibly P site tRNAs. In Chlamydia caviae (strain ATCC VR-813 / DSM 19441 / 03DC25 / GPIC) (Chlamydophila caviae), this protein is Large ribosomal subunit protein uL16.